Reading from the N-terminus, the 683-residue chain is Multidrug resistance protein MdtO (683 aa).

A run of 9 helical transmembrane segments spans residues V43–F63, F75–Y95, G100–M120, L125–M145, W158–F178, F402–W422, I426–S446, M457–V477, and A483–E503.

This sequence belongs to the MdtO family. In terms of assembly, could be part of a tripartite efflux system composed of MdtN, MdtO and MdtP.

It is found in the cell inner membrane. Functionally, could be involved in resistance to puromycin, acriflavine and tetraphenylarsonium chloride. This Escherichia coli (strain K12) protein is Multidrug resistance protein MdtO (mdtO).